The primary structure comprises 115 residues: Non-specific lipid-transfer protein 4.2 (115 aa).

Residues 1 to 25 (MARAAATQLVLVAMVAAMLIVATDA) form the signal peptide. 4 disulfides stabilise this stretch: Cys29–Cys77, Cys39–Cys54, Cys55–Cys97, and Cys75–Cys111.

It belongs to the plant LTP family.

Functionally, plant non-specific lipid-transfer proteins transfer phospholipids as well as galactolipids across membranes. May play a role in wax or cutin deposition in the cell walls of expanding epidermal cells and certain secretory tissues. The sequence is that of Non-specific lipid-transfer protein 4.2 (LTP4.2) from Hordeum vulgare (Barley).